The following is a 337-amino-acid chain: Probable RuBisCO transcriptional regulator (337 aa).

The 58-residue stretch at 6-63 (FTLDQLRILKAIAVEGSFKRAADSLYVSQPAVSLQVQNLERQLDVPLFDRGGRRAQLT) folds into the HTH lysR-type domain. Positions 23-42 (FKRAADSLYVSQPAVSLQVQ) form a DNA-binding region, H-T-H motif.

The protein belongs to the LysR transcriptional regulatory family.

Its function is as follows. Trans-acting transcriptional regulator of RuBisCO genes (rbcL and rbcS) expression. The chain is Probable RuBisCO transcriptional regulator (rbcR) from Nostoc sp. (strain PCC 7120 / SAG 25.82 / UTEX 2576).